A 594-amino-acid chain; its full sequence is ATP-dependent zinc metalloprotease FtsH 1 (594 aa).

At methionine 1–arginine 2 the chain is on the cytoplasmic side. Residues tryptophan 3–methionine 23 traverse the membrane as a helical segment. Residues glutamate 24–proline 92 are Extracellular-facing. A helical membrane pass occupies residues isoleucine 93–tryptophan 113. Residues phenylalanine 114–glutamine 594 lie on the Cytoplasmic side of the membrane. Glycine 186–threonine 193 lines the ATP pocket. A Zn(2+)-binding site is contributed by histidine 408. The active site involves glutamate 409. Positions 412 and 485 each coordinate Zn(2+).

The protein in the central section; belongs to the AAA ATPase family. This sequence in the C-terminal section; belongs to the peptidase M41 family. In terms of assembly, homohexamer. It depends on Zn(2+) as a cofactor.

Its subcellular location is the cell membrane. Its function is as follows. Acts as a processive, ATP-dependent zinc metallopeptidase for both cytoplasmic and membrane proteins. Plays a role in the quality control of integral membrane proteins. The protein is ATP-dependent zinc metalloprotease FtsH 1 of Symbiobacterium thermophilum (strain DSM 24528 / JCM 14929 / IAM 14863 / T).